The following is a 184-amino-acid chain: MATASADTLCSQQEDESWGNLMLHGFQVEAYKPVRVGDKVCYSFYLKNTGSSDVTLGKKGVYLHTNDGDLSSNSGATISPGKSIFVKDCFIASSSGEWTTYPGVCIITAKGEFCHNFETSCTFDVFIECPENWNCMTAEDASQGNYIRYSDELCGYTITGFTAMNKVRCTATEKLLNALQALGV.

This is an uncharacterized protein from Archaeoglobus fulgidus (strain ATCC 49558 / DSM 4304 / JCM 9628 / NBRC 100126 / VC-16).